A 249-amino-acid polypeptide reads, in one-letter code: Proteasome activator complex subunit 1 (249 aa).

The tract at residues 59 to 102 is disordered; it reads APLDIPVPDPVKEKEKEERKKQQEKEEKEEKKKGDEDDKGPPCG. The span at 68-98 shows a compositional bias: basic and acidic residues; it reads PVKEKEKEERKKQQEKEEKEEKKKGDEDDKG.

The protein belongs to the PA28 family. As to quaternary structure, heterodimer of PSME1 and PSME2, which forms a hexameric ring. PSME1 can form homoheptamers.

Its function is as follows. Implicated in immunoproteasome assembly and required for efficient antigen processing. The PA28 activator complex enhances the generation of class I binding peptides by altering the cleavage pattern of the proteasome. The protein is Proteasome activator complex subunit 1 (Psme1) of Mus musculus (Mouse).